The following is a 112-amino-acid chain: Osmotically-inducible putative lipoprotein OsmE (112 aa).

A signal peptide spans 1-20; that stretch reads MNKNMAGILSAAAVLTMLAG. A lipid anchor (N-palmitoyl cysteine) is attached at Cys21. Cys21 carries the S-diacylglycerol cysteine lipid modification.

It localises to the cell inner membrane. The polypeptide is Osmotically-inducible putative lipoprotein OsmE (osmE) (Escherichia coli O157:H7).